The primary structure comprises 467 residues: D-hydantoinase (467 aa).

H65, H67, and K156 together coordinate Zn(2+). K156 is subject to N6-carboxylysine. Y161 is a binding site for substrate. Residues H189 and H245 each contribute to the Zn(2+) site. Substrate is bound at residue S294. D321 is a Zn(2+) binding site. N343 contributes to the substrate binding site.

Belongs to the metallo-dependent hydrolases superfamily. Hydantoinase/dihydropyrimidinase family. Homotetramer. Zn(2+) serves as cofactor. Carboxylation allows a single lysine to coordinate two zinc ions.

Functionally, catalyzes the stereospecific hydrolysis of the cyclic amide bond of D-hydantoin derivatives. The chain is D-hydantoinase (hyuA) from Streptomyces coelicolor (strain ATCC BAA-471 / A3(2) / M145).